The following is a 188-amino-acid chain: Peptidyl-prolyl cis-trans isomerase H (188 aa).

N-acetylalanine is present on A2. A PPIase cyclophilin-type domain is found at F14–L176.

This sequence belongs to the cyclophilin-type PPIase family. PPIase H subfamily. In terms of assembly, interacts directly with PRPF4. Part of a heteromeric complex containing PPIH, PRPF3 and PRPF4 that is stable in the absence of RNA. Component of the U4/U6-U5 tri-snRNP complex composed of the U4, U6 and U5 snRNAs and at least PRPF3, PRPF4, PRPF6, PRPF8, PRPF31, SNRNP200, TXNL4A, SNRNP40, DDX23, CD2BP2, PPIH, SNU13, EFTUD2, SART1 and USP39. Heterodimer with PRPF18. Heterodimer with PRPF18.

The protein localises to the nucleus speckle. Its subcellular location is the cytoplasm. The catalysed reaction is [protein]-peptidylproline (omega=180) = [protein]-peptidylproline (omega=0). Inhibited by cyclosporin A. PPIase that catalyzes the cis-trans isomerization of proline imidic peptide bonds in oligopeptides and may therefore assist protein folding. Participates in pre-mRNA splicing. May play a role in the assembly of the U4/U5/U6 tri-snRNP complex, one of the building blocks of the spliceosome. May act as a chaperone. The polypeptide is Peptidyl-prolyl cis-trans isomerase H (Ppih) (Mus musculus (Mouse)).